The sequence spans 1072 residues: Vacuolar membrane protease (1072 aa).

Over 1 to 9 the chain is Cytoplasmic; it reads MINPISFRP. The helical transmembrane segment at 10–30 threads the bilayer; the sequence is GPVTFWTTLIYLALLIPIVII. Residues 31 to 404 lie on the Vacuolar side of the membrane; sequence NEKTPAAPKT…SFVLFGLRGM (374 aa). N-linked (GlcNAc...) asparagine glycans are attached at residues asparagine 48, asparagine 116, asparagine 119, and asparagine 128. Zn(2+) contacts are provided by histidine 185 and aspartate 197. Catalysis depends on glutamate 231, which acts as the Proton acceptor. Residues glutamate 232, glutamate 257, and histidine 330 each contribute to the Zn(2+) site. A helical transmembrane segment spans residues 405-425; that stretch reads FAWSLTLLIATPLVLVGITWL. Residues 426–457 lie on the Cytoplasmic side of the membrane; sequence LRNLDKDYFFTSTVKTKEHPEYEAVPIGGWKG. The helical transmembrane segment at 458–478 threads the bilayer; sequence FFRFPFALGVAVFFTISSALL. At 479–492 the chain is on the vacuolar side; that stretch reads MNKVNPLIVYSSRY. A helical transmembrane segment spans residues 493-513; it reads SVWVMMVSIFYFSFWMIMRGA. The Cytoplasmic portion of the chain corresponds to 514-523; it reads NFVRPSALHR. The helical transmembrane segment at 524-544 threads the bilayer; that stretch reads GYANLWLFVFGWIVLVAVTAL. Residues 545-554 lie on the Vacuolar side of the membrane; the sequence is EDRRRIAAGY. A helical membrane pass occupies residues 555–575; the sequence is IFVFLESAIFLSCLISFVELL. Residues 576–747 lie on the Cytoplasmic side of the membrane; the sequence is AVPRKSSYAL…YDHEQEWSGH (172 aa). The segment at 593-713 is disordered; it reads GQEHDHNGYQ…GTNDRGRTTF (121 aa). A compositionally biased stretch (basic and acidic residues) spans 606 to 617; the sequence is DSTDEPSLRARA. Over residues 643 to 661 the composition is skewed to polar residues; that stretch reads GTTNGLSTAPSVAAHSSQP. Residues 748–768 traverse the membrane as a helical segment; the sequence is LPSWAWFFQFLLLGPFMIILA. Residues 769–789 are Vacuolar-facing; it reads AQTGLMLTDAVYQTGSDGSKL. The helical transmembrane segment at 790 to 810 threads the bilayer; the sequence is ITPYLIIFVFTVLLILPLTPF. Topologically, residues 811–817 are cytoplasmic; sequence IHRVTHH. A helical membrane pass occupies residues 818–838; sequence IPVFLLVVFIVTLTYNLIAFP. At 839–1072 the chain is on the vacuolar side; the sequence is FSANNRYKTF…VEGRKAFKIV (234 aa). 2 N-linked (GlcNAc...) asparagine glycosylation sites follow: asparagine 932 and asparagine 974.

It belongs to the peptidase M28 family. Requires Zn(2+) as cofactor.

The protein localises to the vacuole membrane. May be involved in vacuolar sorting and osmoregulation. In Neurospora crassa (strain ATCC 24698 / 74-OR23-1A / CBS 708.71 / DSM 1257 / FGSC 987), this protein is Vacuolar membrane protease.